The chain runs to 215 residues: uncharacterized protein (215 aa).

This sequence belongs to the thiaminase-2 family.

This is an uncharacterized protein from Haemophilus influenzae (strain ATCC 51907 / DSM 11121 / KW20 / Rd).